The following is a 335-amino-acid chain: uncharacterized protein (335 aa).

This is an uncharacterized protein from Methanocaldococcus jannaschii (strain ATCC 43067 / DSM 2661 / JAL-1 / JCM 10045 / NBRC 100440) (Methanococcus jannaschii).